Reading from the N-terminus, the 303-residue chain is Vacuolar protein sorting-associated protein 26B (303 aa).

It belongs to the VPS26 family. In terms of assembly, component of the retromer complex which consists of VPS29 (MAG1), VPS26 (VPS26A or VPS26B), VPS35 (VPS35A or VPS35B or VPS35C), VPS5/17 (SNX1 or SNX2A or SNX2B). Component of a retromer subcomplex consisting of VPS29 (MAG1), VPS26 (VPS26A or VPS26B), VPS35 (VPS35A or VPS35B or VPS35C).

It localises to the cytoplasm. Its subcellular location is the endosome membrane. The protein localises to the prevacuolar compartment membrane. It is found in the golgi apparatus. The protein resides in the trans-Golgi network membrane. Functionally, plays a role in vesicular protein sorting. Component of the membrane-associated retromer complex which is essential in endosome-to-Golgi retrograde transport. The VPS29-VPS26-VPS35 subcomplex may be involved in recycling of specific cargos from endosome to the plasma membrane. The sequence is that of Vacuolar protein sorting-associated protein 26B (VPS26B) from Arabidopsis thaliana (Mouse-ear cress).